Consider the following 375-residue polypeptide: Histidine biosynthesis bifunctional protein HisB (375 aa).

The segment at 1–168 (MTPILFVDRD…GIAHELADAP (168 aa)) is histidinol-phosphatase. The active-site Nucleophile is the Asp-8. Residues Asp-8, Asp-10, and Asp-128 each coordinate Mg(2+). Asp-10 functions as the Proton donor in the catalytic mechanism. Residues 169–375 (RRAVVQRNTK…TALPTTKGAL (207 aa)) are imidazoleglycerol-phosphate dehydratase.

In the N-terminal section; belongs to the histidinol-phosphatase family. It in the C-terminal section; belongs to the imidazoleglycerol-phosphate dehydratase family. It depends on Mg(2+) as a cofactor.

The protein resides in the cytoplasm. The catalysed reaction is D-erythro-1-(imidazol-4-yl)glycerol 3-phosphate = 3-(imidazol-4-yl)-2-oxopropyl phosphate + H2O. It carries out the reaction L-histidinol phosphate + H2O = L-histidinol + phosphate. It functions in the pathway amino-acid biosynthesis; L-histidine biosynthesis; L-histidine from 5-phospho-alpha-D-ribose 1-diphosphate: step 6/9. Its pathway is amino-acid biosynthesis; L-histidine biosynthesis; L-histidine from 5-phospho-alpha-D-ribose 1-diphosphate: step 8/9. The sequence is that of Histidine biosynthesis bifunctional protein HisB from Xanthomonas euvesicatoria pv. vesicatoria (strain 85-10) (Xanthomonas campestris pv. vesicatoria).